Reading from the N-terminus, the 448-residue chain is Asparagine--tRNA ligase (448 aa).

It belongs to the class-II aminoacyl-tRNA synthetase family. As to quaternary structure, homodimer.

The protein resides in the cytoplasm. The catalysed reaction is tRNA(Asn) + L-asparagine + ATP = L-asparaginyl-tRNA(Asn) + AMP + diphosphate + H(+). In Streptococcus thermophilus (strain CNRZ 1066), this protein is Asparagine--tRNA ligase.